The chain runs to 376 residues: Chaperone protein DnaJ (376 aa).

The region spanning 5–70 (DFYETLGVAK…QKRAAYDRYG (66 aa)) is the J domain. The segment at 137-215 (GKTAQIRVPT…CHGQGRVTEE (79 aa)) adopts a CR-type zinc-finger fold. Positions 150, 153, 167, 170, 189, 192, 203, and 206 each coordinate Zn(2+). 4 CXXCXGXG motif repeats span residues 150–157 (CDVCSGSG), 167–174 (CGTCQGSG), 189–196 (CPTCHGRG), and 203–210 (CPKCHGQG).

This sequence belongs to the DnaJ family. In terms of assembly, homodimer. Zn(2+) is required as a cofactor.

The protein localises to the cytoplasm. Its function is as follows. Participates actively in the response to hyperosmotic and heat shock by preventing the aggregation of stress-denatured proteins and by disaggregating proteins, also in an autonomous, DnaK-independent fashion. Unfolded proteins bind initially to DnaJ; upon interaction with the DnaJ-bound protein, DnaK hydrolyzes its bound ATP, resulting in the formation of a stable complex. GrpE releases ADP from DnaK; ATP binding to DnaK triggers the release of the substrate protein, thus completing the reaction cycle. Several rounds of ATP-dependent interactions between DnaJ, DnaK and GrpE are required for fully efficient folding. Also involved, together with DnaK and GrpE, in the DNA replication of plasmids through activation of initiation proteins. The polypeptide is Chaperone protein DnaJ (Rhizobium leguminosarum bv. trifolii (strain WSM2304)).